Here is a 387-residue protein sequence, read N- to C-terminus: S-adenosylmethionine synthase (387 aa).

His-16 serves as a coordination point for ATP. Position 18 (Asp-18) interacts with Mg(2+). Glu-44 contributes to the K(+) binding site. L-methionine contacts are provided by Glu-57 and Gln-100. A flexible loop region spans residues 100–110; that stretch reads QSPDIAQGVDE. Residues 167–169, 232–233, Asp-241, 247–248, Ala-264, and Lys-268 contribute to the ATP site; these read DAK, RF, and RK. Asp-241 is an L-methionine binding site. Position 272 (Lys-272) interacts with L-methionine.

Belongs to the AdoMet synthase family. Homotetramer; dimer of dimers. The cofactor is Mg(2+). K(+) is required as a cofactor.

It is found in the cytoplasm. It catalyses the reaction L-methionine + ATP + H2O = S-adenosyl-L-methionine + phosphate + diphosphate. The protein operates within amino-acid biosynthesis; S-adenosyl-L-methionine biosynthesis; S-adenosyl-L-methionine from L-methionine: step 1/1. Catalyzes the formation of S-adenosylmethionine (AdoMet) from methionine and ATP. The overall synthetic reaction is composed of two sequential steps, AdoMet formation and the subsequent tripolyphosphate hydrolysis which occurs prior to release of AdoMet from the enzyme. This is S-adenosylmethionine synthase from Janthinobacterium sp. (strain Marseille) (Minibacterium massiliensis).